The primary structure comprises 437 residues: MTHYHFVGIKGAGMSSLAQIMHDLGNEVQGSDIKNYVFTEVALKNNGIKILPFDANNIQSDMVVVQGNAFPDTHEEVVKAHELKLEVIRYHDFLGHIINQYTSVAVTGAHGKTSTTGLLSHVMNGDKKTSFLIGDGTGLGIPASDYFAFEACEYRRHFLSYHPDYAIMTNIDFDHPDYFKDVDDVFNAFQEMAHNVKKAIIAWGDDTHLRKIEADVPVYYYGFSNKDDVYADNLEISEKGTKFDVYFKGEYFDTFLSPQFGDHNILNALSVITISYLESLNIDNIKEALETFGGVKRRFNETKVGNQVLVDDYAHHPREISATIETARKKYPNKDVIAVFQPHTFSRTQAFLGEFAECLSLADKTFLCEIFGSIRENSGNLTIQDLVQRIDGATLIDEESVNALEQYSDAVILFMGAGDIQKIQRAYMEKIGVTSPF.

Position 108–114 (108–114) interacts with ATP; the sequence is GAHGKTS.

This sequence belongs to the MurCDEF family.

Its subcellular location is the cytoplasm. The enzyme catalyses UDP-N-acetyl-alpha-D-muramate + L-alanine + ATP = UDP-N-acetyl-alpha-D-muramoyl-L-alanine + ADP + phosphate + H(+). It functions in the pathway cell wall biogenesis; peptidoglycan biosynthesis. Functionally, cell wall formation. This chain is UDP-N-acetylmuramate--L-alanine ligase, found in Staphylococcus saprophyticus subsp. saprophyticus (strain ATCC 15305 / DSM 20229 / NCIMB 8711 / NCTC 7292 / S-41).